The sequence spans 364 residues: Methylthioribose-1-phosphate isomerase (364 aa).

Residue Asp-254 is the Proton donor of the active site.

Belongs to the eIF-2B alpha/beta/delta subunits family. MtnA subfamily.

The protein localises to the cytoplasm. It localises to the nucleus. It carries out the reaction 5-(methylsulfanyl)-alpha-D-ribose 1-phosphate = 5-(methylsulfanyl)-D-ribulose 1-phosphate. It functions in the pathway amino-acid biosynthesis; L-methionine biosynthesis via salvage pathway; L-methionine from S-methyl-5-thio-alpha-D-ribose 1-phosphate: step 1/6. In terms of biological role, catalyzes the interconversion of methylthioribose-1-phosphate (MTR-1-P) into methylthioribulose-1-phosphate (MTRu-1-P). The protein is Methylthioribose-1-phosphate isomerase of Drosophila erecta (Fruit fly).